The sequence spans 439 residues: sn-glycerol-3-phosphate-binding periplasmic protein UgpB (439 aa).

Residues 1 to 25 (MFNNSIHKVSICIALTLTFSANAMA) form the signal peptide. Residues Tyr67, Glu91, Ser146, Ser272, Gly309, Tyr348, and Arg399 each contribute to the sn-glycerol 3-phosphate site.

It belongs to the bacterial solute-binding protein 1 family. The complex is composed of two ATP-binding proteins (UgpC), two transmembrane proteins (UgpA and UgpE) and a solute-binding protein (UgpB).

It localises to the periplasm. Part of the ABC transporter complex UgpBAEC involved in sn-glycerol-3-phosphate (G3P) import. Binds G3P. The sequence is that of sn-glycerol-3-phosphate-binding periplasmic protein UgpB (ugpB) from Yersinia pseudotuberculosis serotype I (strain IP32953).